A 381-amino-acid polypeptide reads, in one-letter code: Beta-lactamase (381 aa).

Residues 1-20 (MMKKSICCALLLTASFSTFA) form the signal peptide. Ser-84 acts as the Acyl-ester intermediate in catalysis. The active-site Proton acceptor is Tyr-170. 335–337 (KTG) contacts substrate.

Belongs to the class-C beta-lactamase family.

It localises to the periplasm. The enzyme catalyses a beta-lactam + H2O = a substituted beta-amino acid. With respect to regulation, sulbactam is an effective progressive inhibitor but a poor competitive inhibitor. This protein is a serine beta-lactamase with a substrate specificity for cephalosporins. The chain is Beta-lactamase (ampC) from Citrobacter freundii.